We begin with the raw amino-acid sequence, 531 residues long: UDP-glucuronosyltransferase 2B13 (531 aa).

Positions 1-24 (MPVKCISVLLLLLQLSCCFSSGSC) are cleaved as a signal peptide. Residues asparagine 69, asparagine 101, and asparagine 317 are each glycosylated (N-linked (GlcNAc...) asparagine). Residues 495 to 511 (VIGFLLACVAITTYLIV) form a helical membrane-spanning segment.

It belongs to the UDP-glycosyltransferase family.

The protein resides in the microsome membrane. Its subcellular location is the endoplasmic reticulum membrane. The enzyme catalyses glucuronate acceptor + UDP-alpha-D-glucuronate = acceptor beta-D-glucuronoside + UDP + H(+). In terms of biological role, UDPGT is of major importance in the conjugation and subsequent elimination of potentially toxic xenobiotics and endogenous compounds. Acts on small phenolic agents such as 2-beta-naphthol and 4-methylumbelliferone as well as bulky phenolic compounds like 2-hydroxy- and 4-hydroxybiphenyl. In contrast to 2B16 it is active toward octylgallate. This is UDP-glucuronosyltransferase 2B13 (UGT2B13) from Oryctolagus cuniculus (Rabbit).